A 501-amino-acid chain; its full sequence is Acid-sensing ion channel 1A (501 aa).

Topologically, residues Met1–Phe54 are cytoplasmic. Residues Phe55–Gln71 traverse the membrane as a helical segment. At Phe72 to Glu429 the chain is on the extracellular side. Disulfide bonds link Cys98/Cys199, Cys177/Cys184, Cys294/Cys369, Cys312/Cys365, Cys316/Cys363, Cys325/Cys347, and Cys327/Cys339. A glycan (N-linked (GlcNAc...) asparagine) is linked at Asn164. Asn370 carries an N-linked (GlcNAc...) asparagine glycan. Residues Val430 to Tyr460 form a discontinuously helical membrane-spanning segment. The GAS motif; ion selectivity filter motif lies at Gly446–Ser448. Residues Glu461–His501 lie on the Cytoplasmic side of the membrane.

The protein belongs to the amiloride-sensitive sodium channel (TC 1.A.6) family. ASIC1 subfamily. As to quaternary structure, homotrimer. Heterotrimer; with other ASIC proteins producing channel with different properties. Interacts with asic1c. As to expression, expressed in central nervous system. Faintly expressed in the trunk, presumably in dorsal root ganglia.

It is found in the cell membrane. The protein resides in the postsynaptic cell membrane. It localises to the cell projection. The protein localises to the dendrite. It carries out the reaction Na(+)(in) = Na(+)(out). The enzyme catalyses K(+)(in) = K(+)(out). It catalyses the reaction Li(+)(in) = Li(+)(out). The catalysed reaction is Ca(2+)(in) = Ca(2+)(out). With respect to regulation, inhibited by the diuretic drug amiloride. Functionally, forms voltage-independent, pH-gated trimeric sodium channels that act as postsynaptic excitatory receptors in the nervous system, playing a crucial role in regulating synaptic plasticity, learning, and memory. Upon extracellular pH drop this channel elicits transient, fast activating, and completely desensitizing inward currents. Displays high selectivity for sodium ions but can also permit the permeation of other cations. The protein is Acid-sensing ion channel 1A (asic1a) of Danio rerio (Zebrafish).